Consider the following 90-residue polypeptide: Conotoxin Im6.2 (90 aa).

A signal peptide spans 1–18; sequence MKLTILLLVAALLVLTQA. Residues 19–29 constitute a propeptide that is removed on maturation; that stretch reads RTERRRVKSRK. Disulfide bonds link cysteine 61–cysteine 75, cysteine 68–cysteine 79, and cysteine 74–cysteine 84. Glutamate 89 carries the glutamic acid 1-amide modification.

Belongs to the conotoxin O2 superfamily. As to expression, expressed by the venom duct.

It localises to the secreted. Probable neurotoxin. This Conus imperialis (Imperial cone) protein is Conotoxin Im6.2.